The chain runs to 263 residues: TPR repeat-containing protein DDB_G0285095 (263 aa).

Basic and acidic residues predominate over residues 1–25 (MGCCGSKEKYNGEDVPKSQRLENRP). The disordered stretch occupies residues 1-62 (MGCCGSKEKY…ASASQQNNPT (62 aa)). TPR repeat units lie at residues 87-120 (SDLLAQYGVLLSMEGKNKEAEESLRKAVEVDTDN), 121-154 (SRAWQAYGEFLERTNNPKKAKEVYGEAYKHAAPK), and 162-195 (SSLLLSYAIFIQKSGEIDKAEKLYKRIVTSGARS).

The protein is TPR repeat-containing protein DDB_G0285095 of Dictyostelium discoideum (Social amoeba).